Reading from the N-terminus, the 363-residue chain is 3,4-dihydroxy-2-butanone 4-phosphate synthase (363 aa).

A DHBP synthase region spans residues methionine 1–arginine 202. D-ribulose 5-phosphate is bound by residues arginine 28–glutamate 29, aspartate 33, arginine 141–threonine 145, and glutamate 165. Residue glutamate 29 participates in Mg(2+) binding. Histidine 144 is a Mg(2+) binding site. The interval serine 205–lysine 363 is GTP cyclohydrolase II-like.

It in the N-terminal section; belongs to the DHBP synthase family. This sequence in the C-terminal section; belongs to the GTP cyclohydrolase II family. It depends on Mg(2+) as a cofactor. The cofactor is Mn(2+).

It catalyses the reaction D-ribulose 5-phosphate = (2S)-2-hydroxy-3-oxobutyl phosphate + formate + H(+). The protein operates within cofactor biosynthesis; riboflavin biosynthesis; 2-hydroxy-3-oxobutyl phosphate from D-ribulose 5-phosphate: step 1/1. Its function is as follows. Catalyzes the conversion of D-ribulose 5-phosphate to formate and 3,4-dihydroxy-2-butanone 4-phosphate. This is 3,4-dihydroxy-2-butanone 4-phosphate synthase (ribB) from Neisseria meningitidis serogroup A / serotype 4A (strain DSM 15465 / Z2491).